A 248-amino-acid polypeptide reads, in one-letter code: Probable N-acetylglucosaminyl-phosphatidylinositol de-N-acetylase (248 aa).

Topologically, residues 1–7 (MIWFWST) are lumenal. Residues 8–24 (LLVTAIAVLSTANESSS) traverse the membrane as a helical segment. The Cytoplasmic portion of the chain corresponds to 25–248 (GQEKLAVESI…MSNNVLKRAT (224 aa)).

The protein belongs to the PIGL family.

It is found in the endoplasmic reticulum membrane. The catalysed reaction is a 6-(N-acetyl-alpha-D-glucosaminyl)-1-(1,2-diacyl-sn-glycero-3-phospho)-1D-myo-inositol + H2O = a 6-(alpha-D-glucosaminyl)-1-(1,2-diacyl-sn-glycero-3-phospho)-1D-myo-inositol + acetate. The protein operates within glycolipid biosynthesis; glycosylphosphatidylinositol-anchor biosynthesis. Involved in the second step of GPI biosynthesis. De-N-acetylation of N-acetylglucosaminyl-phosphatidylinositol. This is Probable N-acetylglucosaminyl-phosphatidylinositol de-N-acetylase (gpi12) from Schizosaccharomyces pombe (strain 972 / ATCC 24843) (Fission yeast).